We begin with the raw amino-acid sequence, 319 residues long: Lipoyl synthase (319 aa).

Positions 1–28 are disordered; it reads MVVLVDTVSSTPVRPRHPEKAARPDALS. The span at 16 to 28 shows a compositional bias: basic and acidic residues; it reads RHPEKAARPDALS. [4Fe-4S] cluster-binding residues include C61, C66, C72, C87, C91, C94, and S300. The region spanning 73-289 is the Radical SAM core domain; the sequence is WDKKHATFMI…AKTAYAKGFL (217 aa).

It belongs to the radical SAM superfamily. Lipoyl synthase family. It depends on [4Fe-4S] cluster as a cofactor.

The protein localises to the cytoplasm. The enzyme catalyses [[Fe-S] cluster scaffold protein carrying a second [4Fe-4S](2+) cluster] + N(6)-octanoyl-L-lysyl-[protein] + 2 oxidized [2Fe-2S]-[ferredoxin] + 2 S-adenosyl-L-methionine + 4 H(+) = [[Fe-S] cluster scaffold protein] + N(6)-[(R)-dihydrolipoyl]-L-lysyl-[protein] + 4 Fe(3+) + 2 hydrogen sulfide + 2 5'-deoxyadenosine + 2 L-methionine + 2 reduced [2Fe-2S]-[ferredoxin]. Its pathway is protein modification; protein lipoylation via endogenous pathway; protein N(6)-(lipoyl)lysine from octanoyl-[acyl-carrier-protein]: step 2/2. Catalyzes the radical-mediated insertion of two sulfur atoms into the C-6 and C-8 positions of the octanoyl moiety bound to the lipoyl domains of lipoate-dependent enzymes, thereby converting the octanoylated domains into lipoylated derivatives. In Rhodopseudomonas palustris (strain HaA2), this protein is Lipoyl synthase.